The sequence spans 378 residues: Protein arginine N-methyltransferase 6 (378 aa).

Residues 1–46 (MSLSKKRKLESGDSGGAGAGGEGAEEENGGEQEAAPPRPRRTKSER) form a disordered region. Gly residues predominate over residues 13–22 (DSGGAGAGGE). Arg-38 carries the asymmetric dimethylarginine; by autocatalysis modification. One can recognise an SAM-dependent MTase PRMT-type domain in the interval 47–377 (DQLYYECYSD…EEKTKDFAME (331 aa)). His-60, Arg-69, Gly-93, Glu-115, and Glu-144 together coordinate S-adenosyl-L-methionine. Residues Glu-158 and Glu-167 contribute to the active site.

This sequence belongs to the class I-like SAM-binding methyltransferase superfamily. Protein arginine N-methyltransferase family. PRMT6 subfamily. In terms of assembly, interacts with (and methylates) HIV-1 Tat, Rev and Nucleocapsid protein p7 (NC). Interacts with EPB41L3 and NCOA1. In terms of processing, automethylation enhances its stability.

The protein localises to the nucleus. It catalyses the reaction L-arginyl-[protein] + 2 S-adenosyl-L-methionine = N(omega),N(omega)-dimethyl-L-arginyl-[protein] + 2 S-adenosyl-L-homocysteine + 2 H(+). In terms of biological role, arginine methyltransferase that can catalyze the formation of both omega-N monomethylarginine (MMA) and asymmetrical dimethylarginine (aDMA), with a strong preference for the formation of aDMA. Preferentially methylates arginyl residues present in a glycine and arginine-rich domain and displays preference for monomethylated substrates. Specifically mediates the asymmetric dimethylation of histone H3 'Arg-2' to form H3R2me2a. H3R2me2a represents a specific tag for epigenetic transcriptional repression and is mutually exclusive with methylation on histone H3 'Lys-4' (H3K4me2 and H3K4me3). Acts as a transcriptional repressor of various genes such as HOXA2, THBS1 and TP53. Repression of TP53 blocks cellular senescence. Also methylates histone H2A and H4 'Arg-3' (H2AR3me and H4R3me, respectively). Acts as a regulator of DNA base excision during DNA repair by mediating the methylation of DNA polymerase beta (POLB), leading to the stimulation of its polymerase activity by enhancing DNA binding and processivity. Methylates HMGA1. Regulates alternative splicing events. Acts as a transcriptional coactivator of a number of steroid hormone receptors including ESR1, ESR2, PGR and NR3C1. Promotes fasting-induced transcriptional activation of the gluconeogenic program through methylation of the CRTC2 transcription coactivator. Methylates GPS2, protecting GPS2 from ubiquitination and degradation. Methylates SIRT7, inhibiting SIRT7 histone deacetylase activity and promoting mitochondria biogenesis. This chain is Protein arginine N-methyltransferase 6 (Prmt6), found in Mus musculus (Mouse).